A 154-amino-acid polypeptide reads, in one-letter code: Ribonuclease 1 (154 aa).

It belongs to the BetVI family.

Its subcellular location is the cytoplasm. Functionally, catalyzes the two-stage endonucleolytic cleavage to 3'-phosphomononucleotides and 3'-phosphooligonucleotides with 2',3'-cyclic phosphate intermediates. In Panax ginseng (Korean ginseng), this protein is Ribonuclease 1.